A 710-amino-acid polypeptide reads, in one-letter code: TRP-like ion channel pkd2 (710 aa).

The signal sequence occupies residues 1-23; it reads MRLWRSPLLLLVVVVELFSWADA. The next 9 helical transmembrane spans lie at 173–193, 197–217, 322–342, 376–396, 404–424, 466–486, 492–512, 525–545, and 555–575; these read WVMCMVIGIPLLIFLLISPVL, ALWEIVETMITLFQFAQIQAL, FFATGFSFFIILLFFSLLVAM, FFYRVIFVGFTQMSVLSMWEI, LAFLSMYVIVDMAVLLCYAFV, FFYFTFPLLLITLVRSMFIGF, KVQGCAMFGISVVVFALMVIL, IGVALMNLISGSFILVMCQAF, and IGIIFFALNAITMLLLILGIF. Residues Ser599 and Ser632 each carry the phosphoserine modification. The tract at residues 689–710 is disordered; that stretch reads RISENNNNAERRRKPLPNNAFR.

This sequence belongs to the transient receptor potential (TRP) ion channel family. Interacts with rho1.

It is found in the cell membrane. The protein localises to the golgi apparatus membrane. Its function is as follows. Acts as a key signaling component in the regulation of cell shape and cell wall synthesis through interaction with GTPase Rho1. The sequence is that of TRP-like ion channel pkd2 (pkd2) from Schizosaccharomyces pombe (strain 972 / ATCC 24843) (Fission yeast).